The chain runs to 158 residues: GAF domain-containing protein A (158 aa).

The 127-residue stretch at 32 to 158 (NQIANLANVT…LTQILKLLDN (127 aa)) folds into the GAF domain.

This sequence belongs to the free Met sulfoxide reductase family.

The chain is GAF domain-containing protein A (gafA) from Dictyostelium discoideum (Social amoeba).